The following is a 112-amino-acid chain: Tetracenomycin-F1 monooxygenase (112 aa).

Positions 11–100 (FTLVNVFGVA…SRPKPIFCEV (90 aa)) constitute an ABM domain.

As to quaternary structure, homotrimer.

The enzyme catalyses tetracenomycin F1 + O2 = tetracenomycin D3 + H2O + H(+). The protein operates within antibiotic biosynthesis; tetracenomycin C biosynthesis. Inhibited by p-chloromercuribenzoic acid, N-ethylmaleimide and diethyl pyrocarbonate. Functionally, oxygenase required for conversion of tetracenomycin F1 to tetracenomycin D3. This is Tetracenomycin-F1 monooxygenase (tcmH) from Streptomyces glaucescens.